Reading from the N-terminus, the 145-residue chain is D-aminoacyl-tRNA deacylase (145 aa).

The short motif at 137 to 138 (GP) is the Gly-cisPro motif, important for rejection of L-amino acids element.

It belongs to the DTD family. In terms of assembly, homodimer.

It is found in the cytoplasm. The catalysed reaction is glycyl-tRNA(Ala) + H2O = tRNA(Ala) + glycine + H(+). It carries out the reaction a D-aminoacyl-tRNA + H2O = a tRNA + a D-alpha-amino acid + H(+). In terms of biological role, an aminoacyl-tRNA editing enzyme that deacylates mischarged D-aminoacyl-tRNAs. Also deacylates mischarged glycyl-tRNA(Ala), protecting cells against glycine mischarging by AlaRS. Acts via tRNA-based rather than protein-based catalysis; rejects L-amino acids rather than detecting D-amino acids in the active site. By recycling D-aminoacyl-tRNA to D-amino acids and free tRNA molecules, this enzyme counteracts the toxicity associated with the formation of D-aminoacyl-tRNA entities in vivo and helps enforce protein L-homochirality. In Pectobacterium atrosepticum (strain SCRI 1043 / ATCC BAA-672) (Erwinia carotovora subsp. atroseptica), this protein is D-aminoacyl-tRNA deacylase.